We begin with the raw amino-acid sequence, 658 residues long: Glycogen debranching enzyme (658 aa).

Residue D335 is the Nucleophile of the active site. E370 acts as the Proton donor in catalysis.

The protein belongs to the glycosyl hydrolase 13 family.

It carries out the reaction Hydrolysis of (1-&gt;6)-alpha-D-glucosidic linkages to branches with degrees of polymerization of three or four glucose residues in limit dextrin.. The protein operates within glycan degradation; glycogen degradation. Removes maltotriose and maltotetraose chains that are attached by 1,6-alpha-linkage to the limit dextrin main chain, generating a debranched limit dextrin. The chain is Glycogen debranching enzyme from Erwinia tasmaniensis (strain DSM 17950 / CFBP 7177 / CIP 109463 / NCPPB 4357 / Et1/99).